The sequence spans 341 residues: Glycerol-3-phosphate dehydrogenase [NAD(P)+] (341 aa).

4 residues coordinate NADPH: S14, F15, R35, and K108. The sn-glycerol 3-phosphate site is built by K108 and G136. Residue S140 coordinates NADPH. Residues K191, D244, S254, R255, and N256 each coordinate sn-glycerol 3-phosphate. K191 acts as the Proton acceptor in catalysis. An NADPH-binding site is contributed by R255. V279 and E281 together coordinate NADPH.

Belongs to the NAD-dependent glycerol-3-phosphate dehydrogenase family.

The protein resides in the cytoplasm. The catalysed reaction is sn-glycerol 3-phosphate + NAD(+) = dihydroxyacetone phosphate + NADH + H(+). It carries out the reaction sn-glycerol 3-phosphate + NADP(+) = dihydroxyacetone phosphate + NADPH + H(+). It participates in membrane lipid metabolism; glycerophospholipid metabolism. Functionally, catalyzes the reduction of the glycolytic intermediate dihydroxyacetone phosphate (DHAP) to sn-glycerol 3-phosphate (G3P), the key precursor for phospholipid synthesis. The sequence is that of Glycerol-3-phosphate dehydrogenase [NAD(P)+] from Pseudomonas putida (strain GB-1).